The chain runs to 394 residues: T-cell acute lymphocytic leukemia protein 1 (394 aa).

Residues 1 to 17 show a composition bias toward basic and acidic residues; sequence MSLKMMERLSTDMDGTR. The disordered stretch occupies residues 1 to 49; the sequence is MSLKMMERLSTDMDGTRDVASPPARQDAAEPERTVELSGVKEGAAPNSP. Tandem repeats lie at residues 83–89, 94–100, 105–111, 116–122, 127–133, 149–155, and 167–173. The 7 X 7 AA approximate repeats of [TS]-E-L-C-R-[AP]-P stretch occupies residues 83–173; the sequence is TELCRATLTP…TATTELCRPP (91 aa). The 53-residue stretch at 262-314 folds into the bHLH domain; sequence VRRIFTNSRERWRQQNVNGAFAELRKLIPTHPPDKKLSKNEILRLAMKYINFL. Residues 347–394 form a disordered region; the sequence is LSPNSSCGSSLDGAPSPDSYSEEHDALDSKHSRNLHQAMLPIDGSGQR. The segment covering 367-377 has biased composition (basic and acidic residues); sequence SEEHDALDSKH.

First expressed in patches on the ventral side of the embryo in a region that will give rise to hematopoietic tissue. By late neurula stages, expressed throughout the ventral blood island region. By tailbud stages, expression extends to probable vascular progenitor cells, but is excluded from the presumptive liver anlage. Also expressed in the central nervous system at the tailbud stage.

Its subcellular location is the nucleus. Functionally, transcription factor that acts synergistically with lmo2 and gata1 to specify embryonic dorsal mesoderm to a hematopoietic fate. This Xenopus laevis (African clawed frog) protein is T-cell acute lymphocytic leukemia protein 1.